We begin with the raw amino-acid sequence, 301 residues long: NADH-cytochrome b5 reductase 3 (301 aa).

A lipid anchor (N-myristoyl glycine) is attached at G2. The FAD-binding FR-type domain maps to 40–152 (DIKYPLRLID…RGPSGLLVYQ (113 aa)). Position 42 is an N6-acetyllysine (K42). Y43 carries the post-translational modification Phosphotyrosine. Residues R92, P93, Y94, V109, K111, and F114 each coordinate FAD. The residue at position 120 (K120) is an N6-acetyllysine. 4 residues coordinate FAD: K126, M127, S128, and T185.

Belongs to the flavoprotein pyridine nucleotide cytochrome reductase family. Component of a complex composed of cytochrome b5, NADH-cytochrome b5 reductase (CYB5R3) and MTARC2. Interacts with MTLN; the interaction is required to maintain cellular lipid composition and leads to stimulation of mitochondrial respiratory complex I activity. The cofactor is FAD. In terms of tissue distribution, expressed at late stages of erythroid maturation.

It localises to the endoplasmic reticulum membrane. Its subcellular location is the mitochondrion outer membrane. The protein resides in the cytoplasm. It catalyses the reaction 2 Fe(III)-[cytochrome b5] + NADH = 2 Fe(II)-[cytochrome b5] + NAD(+) + H(+). In terms of biological role, catalyzes the reduction of two molecules of cytochrome b5 using NADH as the electron donor. In Homo sapiens (Human), this protein is NADH-cytochrome b5 reductase 3.